Here is a 347-residue protein sequence, read N- to C-terminus: NADH-ubiquinone oxidoreductase chain 2 (347 aa).

10 consecutive transmembrane segments (helical) span residues 13 to 33, 55 to 75, 96 to 116, 122 to 142, 151 to 171, 178 to 198, 199 to 219, 237 to 257, 277 to 297, and 326 to 346; these read VFTG…WLGL, AAIK…MAIL, LMIV…FWVP, VPLT…ISIM, TNIL…GGLN, ILAY…PYNP, NITI…FLIL, LTWL…LPPL, IAPT…ARLI, and LPTL…ILSI.

This sequence belongs to the complex I subunit 2 family. As to quaternary structure, core subunit of respiratory chain NADH dehydrogenase (Complex I) which is composed of 45 different subunits. Interacts with TMEM242.

The protein resides in the mitochondrion inner membrane. It catalyses the reaction a ubiquinone + NADH + 5 H(+)(in) = a ubiquinol + NAD(+) + 4 H(+)(out). Core subunit of the mitochondrial membrane respiratory chain NADH dehydrogenase (Complex I) which catalyzes electron transfer from NADH through the respiratory chain, using ubiquinone as an electron acceptor. Essential for the catalytic activity and assembly of complex I. This is NADH-ubiquinone oxidoreductase chain 2 from Pongo pygmaeus (Bornean orangutan).